The chain runs to 214 residues: Large ribosomal subunit protein uL3 (214 aa).

The interval 129–155 (FGRGPMSHGSKNHRRPGSVGAGTTPGR) is disordered.

The protein belongs to the universal ribosomal protein uL3 family. Part of the 50S ribosomal subunit. Forms a cluster with proteins L14 and L19.

In terms of biological role, one of the primary rRNA binding proteins, it binds directly near the 3'-end of the 23S rRNA, where it nucleates assembly of the 50S subunit. The protein is Large ribosomal subunit protein uL3 of Synechococcus sp. (strain JA-3-3Ab) (Cyanobacteria bacterium Yellowstone A-Prime).